A 240-amino-acid polypeptide reads, in one-letter code: MTRHQKRLAVPNSWPVERKTNTFTVKAGAGPHGEAGVPLVVLLRDVLGYVDSTKEARYALNNDSVLVNGDAISDEQRPIGMFDILAFPERGEFFRVFPDEGGRLALTSVDEEAAGSRLGKITNKSVVPGGDAQLTLHDGTNVLVDADTEYDTKDSIVVDNESKDVVAHFEYEEGALVTAVAGQHAGRIGEVADIDVTLGSGSNTVFVGDDEDGYETVEEYLVVIDENFTGDDADEVDSDE.

Positions 37 to 99 (VPLVVLLRDV…RGEFFRVFPD (63 aa)) constitute an S4 RNA-binding domain.

Belongs to the eukaryotic ribosomal protein eS4 family.

The sequence is that of Small ribosomal subunit protein eS4 from Halorubrum lacusprofundi (strain ATCC 49239 / DSM 5036 / JCM 8891 / ACAM 34).